Here is an 84-residue protein sequence, read N- to C-terminus: Cell division topological specificity factor (84 aa).

Belongs to the MinE family.

Prevents the cell division inhibition by proteins MinC and MinD at internal division sites while permitting inhibition at polar sites. This ensures cell division at the proper site by restricting the formation of a division septum at the midpoint of the long axis of the cell. This chain is Cell division topological specificity factor, found in Paraburkholderia xenovorans (strain LB400).